The sequence spans 457 residues: Dihydrolipoyl dehydrogenase (457 aa).

Residues 32 to 40, K49, and A113 contribute to the FAD site; that span reads EKEYFGGVC. C40 and C45 form a disulfide bridge. NAD(+) is bound by residues 178–182, V235, and 262–265; these read GGGVI and SIGR. D303 and A311 together coordinate FAD. H437 functions as the Proton acceptor in the catalytic mechanism.

This sequence belongs to the class-I pyridine nucleotide-disulfide oxidoreductase family. Homodimer. FAD is required as a cofactor.

Its subcellular location is the cytoplasm. It carries out the reaction N(6)-[(R)-dihydrolipoyl]-L-lysyl-[protein] + NAD(+) = N(6)-[(R)-lipoyl]-L-lysyl-[protein] + NADH + H(+). Functionally, lipoamide dehydrogenase is a component of the alpha-ketoacid dehydrogenase complexes. This Mycoplasma pneumoniae (strain ATCC 29342 / M129 / Subtype 1) (Mycoplasmoides pneumoniae) protein is Dihydrolipoyl dehydrogenase (pdhD).